Reading from the N-terminus, the 212-residue chain is 3-isopropylmalate dehydratase small subunit (212 aa).

Belongs to the LeuD family. LeuD type 1 subfamily. Heterodimer of LeuC and LeuD.

It catalyses the reaction (2R,3S)-3-isopropylmalate = (2S)-2-isopropylmalate. The protein operates within amino-acid biosynthesis; L-leucine biosynthesis; L-leucine from 3-methyl-2-oxobutanoate: step 2/4. Functionally, catalyzes the isomerization between 2-isopropylmalate and 3-isopropylmalate, via the formation of 2-isopropylmaleate. This chain is 3-isopropylmalate dehydratase small subunit, found in Dechloromonas aromatica (strain RCB).